The chain runs to 921 residues: Ribosome-releasing factor 2, mitochondrial (921 aa).

The transit peptide at 1 to 55 (MVSALLLRARQNGRAARCLDYPKVKCWALASLPKSSLEKPGFSQVRRFSVFHPQS) directs the protein to the mitochondrion. In terms of domain architecture, tr-type G spans 60 to 368 (DLTRNIGIIA…SVVDLLPSPQ (309 aa)). GTP contacts are provided by residues 69–76 (AHIDAGKT), 152–156 (DTPGH), and 206–209 (NKMD).

Belongs to the TRAFAC class translation factor GTPase superfamily. Classic translation factor GTPase family. EF-G/EF-2 subfamily.

The protein localises to the mitochondrion. Mitochondrial GTPase that mediates the disassembly of ribosomes from messenger RNA at the termination of mitochondrial protein biosynthesis. Not involved in the GTP-dependent ribosomal translocation step during translation elongation. This Emericella nidulans (strain FGSC A4 / ATCC 38163 / CBS 112.46 / NRRL 194 / M139) (Aspergillus nidulans) protein is Ribosome-releasing factor 2, mitochondrial (mef2).